We begin with the raw amino-acid sequence, 148 residues long: Flavodoxin (148 aa).

The region spanning 4-145 (VLIVYGSTTG…DVSAWAGRVV (142 aa)) is the Flavodoxin-like domain.

This sequence belongs to the flavodoxin family. It depends on FMN as a cofactor.

Its function is as follows. Low-potential electron donor to a number of redox enzymes. This Nitratidesulfovibrio vulgaris (strain DSM 19637 / Miyazaki F) (Desulfovibrio vulgaris) protein is Flavodoxin.